The primary structure comprises 314 residues: Formylglycine-generating enzyme (314 aa).

Low complexity predominate over residues 1 to 20 (MAVAAPSPAAAAEPGPAARP). The tract at residues 1–31 (MAVAAPSPAAAAEPGPAARPRSTRGQVRLPG) is disordered. Ca(2+) contacts are provided by Asn-194, Ile-195, Asp-208, and His-210. Cu(2+) contacts are provided by Cys-272 and Cys-277.

The protein belongs to the sulfatase-modifying factor family. Cu(2+) serves as cofactor.

It catalyses the reaction L-cysteinyl-[sulfatase] + 2 a thiol + O2 = an organic disulfide + 3-oxo-L-alanyl-[sulfatase] + hydrogen sulfide + H2O + H(+). It participates in protein modification; sulfatase oxidation. In terms of biological role, oxidase that catalyzes the conversion of cysteine to 3-oxoalanine on target proteins. 3-oxoalanine modification, which is also named formylglycine (fGly), occurs in the maturation of arylsulfatases and some alkaline phosphatases that use the hydrated form of 3-oxoalanine as a catalytic nucleophile. In Streptomyces coelicolor (strain ATCC BAA-471 / A3(2) / M145), this protein is Formylglycine-generating enzyme.